Reading from the N-terminus, the 398-residue chain is Succinate--CoA ligase [ADP-forming] subunit beta (398 aa).

The ATP-grasp domain maps to 9-254; it reads KAVLREFGVP…ESEEDAKEIE (246 aa). ATP-binding positions include lysine 46, 53–55, glutamate 109, serine 112, and glutamate 117; that span reads GRG. 2 residues coordinate Mg(2+): asparagine 209 and aspartate 223. Substrate is bound by residues asparagine 274 and 331–333; that span reads GIM.

It belongs to the succinate/malate CoA ligase beta subunit family. Heterotetramer of two alpha and two beta subunits. Mg(2+) is required as a cofactor.

The catalysed reaction is succinate + ATP + CoA = succinyl-CoA + ADP + phosphate. It carries out the reaction GTP + succinate + CoA = succinyl-CoA + GDP + phosphate. It functions in the pathway carbohydrate metabolism; tricarboxylic acid cycle; succinate from succinyl-CoA (ligase route): step 1/1. In terms of biological role, succinyl-CoA synthetase functions in the citric acid cycle (TCA), coupling the hydrolysis of succinyl-CoA to the synthesis of either ATP or GTP and thus represents the only step of substrate-level phosphorylation in the TCA. The beta subunit provides nucleotide specificity of the enzyme and binds the substrate succinate, while the binding sites for coenzyme A and phosphate are found in the alpha subunit. This is Succinate--CoA ligase [ADP-forming] subunit beta from Rhodopseudomonas palustris (strain HaA2).